Consider the following 120-residue polypeptide: Ribosome-binding factor A (120 aa).

It belongs to the RbfA family. Monomer. Binds 30S ribosomal subunits, but not 50S ribosomal subunits or 70S ribosomes.

It is found in the cytoplasm. In terms of biological role, one of several proteins that assist in the late maturation steps of the functional core of the 30S ribosomal subunit. Associates with free 30S ribosomal subunits (but not with 30S subunits that are part of 70S ribosomes or polysomes). Required for efficient processing of 16S rRNA. May interact with the 5'-terminal helix region of 16S rRNA. The polypeptide is Ribosome-binding factor A (Chlamydia pneumoniae (Chlamydophila pneumoniae)).